Consider the following 370-residue polypeptide: 3-dehydroquinate synthase (370 aa).

NAD(+)-binding positions include 112 to 116 (GVIGD), 136 to 137 (TT), Lys-149, Lys-158, and 176 to 179 (TLAT). 3 residues coordinate Zn(2+): Glu-191, His-254, and His-276.

This sequence belongs to the sugar phosphate cyclases superfamily. Dehydroquinate synthase family. Co(2+) serves as cofactor. The cofactor is Zn(2+). NAD(+) is required as a cofactor.

Its subcellular location is the cytoplasm. The catalysed reaction is 7-phospho-2-dehydro-3-deoxy-D-arabino-heptonate = 3-dehydroquinate + phosphate. The protein operates within metabolic intermediate biosynthesis; chorismate biosynthesis; chorismate from D-erythrose 4-phosphate and phosphoenolpyruvate: step 2/7. Functionally, catalyzes the conversion of 3-deoxy-D-arabino-heptulosonate 7-phosphate (DAHP) to dehydroquinate (DHQ). This is 3-dehydroquinate synthase from Xylella fastidiosa (strain M12).